Reading from the N-terminus, the 493-residue chain is Succinate-semialdehyde dehydrogenase [NADP(+)] 2 (493 aa).

Residue 242–247 (GSTNVG) participates in NAD(+) binding. Glutamate 264 is an active-site residue. Cysteine 298 serves as the catalytic Nucleophile.

The protein belongs to the aldehyde dehydrogenase family. In terms of assembly, homotetramer.

Its subcellular location is the cytoplasm. The enzyme catalyses succinate semialdehyde + NAD(+) + H2O = succinate + NADH + 2 H(+). The catalysed reaction is succinate semialdehyde + NADP(+) + H2O = succinate + NADPH + 2 H(+). It participates in amino-acid degradation; 4-aminobutanoate degradation. Functionally, catalyzes the oxidation of succinate semialdehyde to succinate. Can utilize both NAD(+) or NADP(+) as a coenzyme. Functions in the GABA shunt, which allows to bypass 2 reactions in the TCA cycle by removing alpha-ketoglutarate from the cycle and feeding succinate and NADH back into the cycle. The chain is Succinate-semialdehyde dehydrogenase [NADP(+)] 2 (ssd2) from Schizosaccharomyces pombe (strain 972 / ATCC 24843) (Fission yeast).